Consider the following 275-residue polypeptide: Shikimate dehydrogenase (NADP(+)) (275 aa).

Shikimate-binding positions include 19–21 (SKS) and Thr66. Lys70 (proton acceptor) is an active-site residue. Residue Glu82 coordinates NADP(+). Positions 91 and 106 each coordinate shikimate. NADP(+)-binding positions include 130 to 134 (GAGGA), 154 to 159 (NRTASK), and Met217. Shikimate is bound at residue Tyr219. Gly241 lines the NADP(+) pocket.

The protein belongs to the shikimate dehydrogenase family. Homodimer.

The catalysed reaction is shikimate + NADP(+) = 3-dehydroshikimate + NADPH + H(+). The protein operates within metabolic intermediate biosynthesis; chorismate biosynthesis; chorismate from D-erythrose 4-phosphate and phosphoenolpyruvate: step 4/7. In terms of biological role, involved in the biosynthesis of the chorismate, which leads to the biosynthesis of aromatic amino acids. Catalyzes the reversible NADPH linked reduction of 3-dehydroshikimate (DHSA) to yield shikimate (SA). The chain is Shikimate dehydrogenase (NADP(+)) from Colwellia psychrerythraea (strain 34H / ATCC BAA-681) (Vibrio psychroerythus).